A 148-amino-acid polypeptide reads, in one-letter code: Putative nickel-responsive regulator (148 aa).

Ni(2+) contacts are provided by His76, His87, His89, and Cys95.

This sequence belongs to the transcriptional regulatory CopG/NikR family. Ni(2+) serves as cofactor.

Functionally, transcriptional regulator. This Rhodopseudomonas palustris (strain ATCC BAA-98 / CGA009) protein is Putative nickel-responsive regulator.